The chain runs to 1249 residues: Apoptotic protease-activating factor 1 (1249 aa).

The CARD domain occupies 1 to 90; that stretch reads MDAKARNCLL…KDLAGLLHSG (90 aa). The NB-ARC domain maps to 106–415; it reads NTSFVRTVLC…LETEEVEDIL (310 aa). Residues 154–161 and Arg-265 each bind ATP; that span reads GMAGCGKS. The stretch at 613–652 is one WD 1-1 repeat; the sequence is PHTDAVYHACFSQDGQRIASCGADKTLQVFKAETGEKLLD. The stretch at 655-694 is one WD 1-2 repeat; the sequence is AHEDEVLCCAFSSDDSYIATCSVDKKVKIWDSGTGKLVHT. The WD 1-3 repeat unit spans residues 697-738; that stretch reads EHSEQVNCCHFTNKSNHLLLATGSNDSFLKLWDLNQKECRNT. The WD 1-4 repeat unit spans residues 741–780; the sequence is GHTNSVTHCRFSPDDELLASCSADGTLKLWDVRSANEKKS. A WD 1-5 repeat occupies 796-837; that stretch reads DVEVIVKCCSWSADGDRIIVAAKNKVLLLDIHTSGLLTEIHT. The WD 1-6 repeat unit spans residues 838–877; the sequence is GHHSTIQYCDFSPYDHLAVIALSQYCVELWNIDSRVKVAD. One copy of the WD 1-7 repeat lies at 880–910; the sequence is GHLSWVHGVMFSPDGSSFLTASDDQTIRVWE. Residues 910 to 921 are interpropeller linker; sequence ETRKVCKNSAIV. The stretch at 922–958 is one WD 2-1 repeat; sequence LKQEIDVVFQENEMMVLAVDNIRGLQLIAGKTGQIDY. The WD 2-2 repeat unit spans residues 959–998; sequence LPEAQVSCCCLSPHLEYVAFGDEEGAIKIIELPNNRVFSS. The stretch at 1001 to 1040 is one WD 2-3 repeat; the sequence is GHKKAVRHIQFTADGKTLISSSEDSVIQVWNWQTEEYVFL. A WD 2-4 repeat occupies 1042–1080; it reads AHQETVKDFRLLRDSRLLSWSFDGTVKVWNVITGRIERD. The stretch at 1083–1122 is one WD 2-5 repeat; it reads CHQGTVLSCAISSDATKFSSTSADKTAKIWSFELPSPLHE. The stretch at 1125–1164 is one WD 2-6 repeat; the sequence is GHNSCVRCSAFSLDGILLATGDDNGEIRIWNVSDGQLLHL. The stretch at 1176-1213 is one WD 2-7 repeat; the sequence is THGGWVTDVCFSPDRKMLVSAGGYLKWWNVVTGESSQT. A WD 2-8 repeat occupies 1214–1249; the sequence is FYTNGTNLKKIHVSPDFRTYVTVDNLGILYILQVLE.

As to quaternary structure, monomer. Oligomerizes to a heptameric ring, known as the apoptosome, upon binding of cytochrome c and dATP. Oligomeric Apaf-1 and pro-caspase-9 bind to each other via their respective NH2-terminal CARD domains. Interacts with UACA. Interacts with APIP. Interacts (via CARD and NACHT domains) with NAIP/BIRC1 (via NACHT domain). Interacts with CIAO2A.

Its subcellular location is the cytoplasm. Its function is as follows. Regulates programmed cell death; necessary for normal brain development. Participates with pro-caspase-9 (Apaf-3) in the cytochrome c-dependent activation of caspase-3, leading to apoptosis. This activation requires ATP. This chain is Apoptotic protease-activating factor 1 (Apaf1), found in Rattus norvegicus (Rat).